Reading from the N-terminus, the 727-residue chain is Probable acyl-activating enzyme 18, peroxisomal (727 aa).

The short motif at 725-727 is the Microbody targeting signal element; sequence SRI.

It belongs to the ATP-dependent AMP-binding enzyme family. Expressed in flowers.

The protein resides in the peroxisome. In terms of biological role, may be involved in the peroxisomal activation of 2,4-dichlorophenoxybutyric acid (2,4-DB), a precursor of active auxins that inhibit root growth. The protein is Probable acyl-activating enzyme 18, peroxisomal (AAE18) of Arabidopsis thaliana (Mouse-ear cress).